We begin with the raw amino-acid sequence, 378 residues long: Endopolygalacturonase I (378 aa).

The signal sequence occupies residues methionine 1–alanine 20. Positions serine 21–arginine 39 are excised as a propeptide. Cysteines 43 and 61 form a disulfide. An O-linked (Man...) threonine glycan is attached at threonine 44. Residues serine 46, serine 48, serine 52, serine 53, serine 55, serine 57, and serine 62 are each glycosylated (O-linked (Man...) serine). Residue threonine 63 is glycosylated (O-linked (Man...) threonine). Serine 73 carries an O-linked (Man...) serine glycan. PbH1 repeat units follow at residues serine 174–threonine 204, serine 205–serine 226, glycine 227–serine 247, valine 256–threonine 277, and valine 285–glutamine 307. Aspartate 219 functions as the Proton donor in the catalytic mechanism. A disulfide bond links cysteine 221 and cysteine 237. The active site involves histidine 241. Residue asparagine 258 is glycosylated (N-linked (GlcNAc...) asparagine). 2 disulfides stabilise this stretch: cysteine 345–cysteine 350 and cysteine 369–cysteine 378.

This sequence belongs to the glycosyl hydrolase 28 family.

Its subcellular location is the secreted. It carries out the reaction (1,4-alpha-D-galacturonosyl)n+m + H2O = (1,4-alpha-D-galacturonosyl)n + (1,4-alpha-D-galacturonosyl)m.. Its function is as follows. Involved in maceration and soft-rotting of plant tissue. Hydrolyzes the 1,4-alpha glycosidic bonds of de-esterified pectate in the smooth region of the plant cell wall. This is Endopolygalacturonase I (pgaI) from Aspergillus aculeatus.